A 134-amino-acid polypeptide reads, in one-letter code: Profilin-2 (134 aa).

An intrachain disulfide couples cysteine 13 to cysteine 118. An Involved in PIP2 interaction motif is present at residues 84-100 (AVTRGKKGTGGITIKKT). Threonine 114 bears the Phosphothreonine mark.

The protein belongs to the profilin family. In terms of assembly, occurs in many kinds of cells as a complex with monomeric actin in a 1:1 ratio. In terms of processing, phosphorylated by MAP kinases.

It localises to the cytoplasm. The protein resides in the cytoskeleton. Binds to actin and affects the structure of the cytoskeleton. At high concentrations, profilin prevents the polymerization of actin, whereas it enhances it at low concentrations. The sequence is that of Profilin-2 from Olea europaea (Common olive).